The sequence spans 273 residues: Glutamate racemase (273 aa).

Substrate-binding positions include 7-8 (DS) and 39-40 (YG). Residue Cys70 is the Proton donor/acceptor of the active site. 71–72 (NT) lines the substrate pocket. The active-site Proton donor/acceptor is the Cys194. 195–196 (TH) lines the substrate pocket.

This sequence belongs to the aspartate/glutamate racemases family.

The catalysed reaction is L-glutamate = D-glutamate. It participates in cell wall biogenesis; peptidoglycan biosynthesis. Provides the (R)-glutamate required for cell wall biosynthesis. The sequence is that of Glutamate racemase from Dinoroseobacter shibae (strain DSM 16493 / NCIMB 14021 / DFL 12).